A 107-amino-acid polypeptide reads, in one-letter code: MTTQAIHSVLAMMNITAEQAAGNTLTLSAPATAGAGFMSELNSSIKQINGMQIEARRKAEKFELGVPGIALNDVMVDMQKASLALHLGIQVNNKLINAYQEVMNMAV.

This sequence belongs to the FliE family.

Its subcellular location is the bacterial flagellum basal body. This is Flagellar hook-basal body complex protein FliE from Sodalis glossinidius (strain morsitans).